Here is a 336-residue protein sequence, read N- to C-terminus: MIQQVQQAVFDPERFLVDIEETCRAIGAPYSQEKTLKVLEGFQASFARGAVLWRITNRPGDALNYRFYERVSIDAVSCAVEAKLFQPNHPLSELIVSWTALYPGAAQQSCDFDAEQGFSKIWVYLGDMRPLSDILSAPHVPLSIRKHATTFYNLGLELVRHVAADFTSNTINIYFRVQGLLTLERARSLVRLSDPAYLLECGEVEEMRRLLNPVGFTFAVTMDYSTGDIKRVGIYALKLAPGTYPAMDERLKATRAIPLEKQAYILLSQGVLMAKEVAAAFPVPSETAAVNRPREVDVEVGVGVASFMFQPTTPIAPTVDVRDNVVVAVFHAVESP.

Belongs to the aromatic prenyltransferase family.

Its function is as follows. Prenyltransferase that attaches isoprenoid moieties to carbon atoms of aromatic substrates in an enzyme-catalyzed Friedel-Crafts reaction. Shows specificity for dimethylallyl diphosphate (DMAPP) and does not accept geranyl diphosphate (GPP) or isopentenyl diphosphate (IPP). Prenylates the artificial substrate 2,7-dihydroxynaphthalene (2,7-DHN), as well as dihydrophenazine-1-carboxylic acid at a lower level. Only traces of products are detected with aspulvinone E, flaviolin, or 4-hydroxybenzoic acid as substrates; and no product is formed with L-tryptophan, L-tyrosine, or 4-hydroxyphenylpyruvate. Ptf seems no to be involved in the prenylation reaction in the biosynthesis of aspulvinone H and J and the physiological function of ptf remains unknown. The chain is Aromatic prenyltransferase from Aspergillus terreus (strain NIH 2624 / FGSC A1156).